The following is a 78-amino-acid chain: Large ribosomal subunit protein eL38 (78 aa).

The protein belongs to the eukaryotic ribosomal protein eL38 family.

This is Large ribosomal subunit protein eL38 (RpL38) from Maconellicoccus hirsutus (Pink hibiscus mealybug).